A 326-amino-acid polypeptide reads, in one-letter code: Polycomb complex protein BMI-1-A (326 aa).

The RING-type zinc finger occupies 18–57 (CVLCGGYFIDATTIIECLHSFCKTCIVRYLETSKYCPICD). The Nuclear localization signal motif lies at 81 to 95 (KLVPGLFKGEMKRRR). 2 disordered regions span residues 239-262 (NPHT…DKAG) and 274-326 (CIPS…ISSG). Low complexity predominate over residues 290 to 303 (ISSTINGTSSSSSS).

As to quaternary structure, component of a PRC1-like complex. Interacts with cbx4.

It is found in the nucleus. Functionally, component of a Polycomb group (PcG) multiprotein PRC1-like complex, a complex class required to maintain the transcriptionally repressive state of many genes, including Hox genes, throughout development. PcG PRC1 complex acts via chromatin remodeling and modification of histones; it mediates monoubiquitination of histone H2A 'Lys-119', rendering chromatin heritably changed in its expressibility. In the PRC1 complex, it is required to stimulate the E3 ubiquitin-protein ligase activity of rnf2. This is Polycomb complex protein BMI-1-A (bmi1a) from Xenopus laevis (African clawed frog).